Consider the following 419-residue polypeptide: Serine hydroxymethyltransferase (419 aa).

(6S)-5,6,7,8-tetrahydrofolate-binding positions include leucine 121 and 125–127 (GHL). At lysine 229 the chain carries N6-(pyridoxal phosphate)lysine. 354–356 (SPF) is a (6S)-5,6,7,8-tetrahydrofolate binding site.

Belongs to the SHMT family. Homodimer. Pyridoxal 5'-phosphate serves as cofactor.

It is found in the cytoplasm. It carries out the reaction (6R)-5,10-methylene-5,6,7,8-tetrahydrofolate + glycine + H2O = (6S)-5,6,7,8-tetrahydrofolate + L-serine. The protein operates within one-carbon metabolism; tetrahydrofolate interconversion. Its pathway is amino-acid biosynthesis; glycine biosynthesis; glycine from L-serine: step 1/1. Its function is as follows. Catalyzes the reversible interconversion of serine and glycine with tetrahydrofolate (THF) serving as the one-carbon carrier. This reaction serves as the major source of one-carbon groups required for the biosynthesis of purines, thymidylate, methionine, and other important biomolecules. Also exhibits THF-independent aldolase activity toward beta-hydroxyamino acids, producing glycine and aldehydes, via a retro-aldol mechanism. The polypeptide is Serine hydroxymethyltransferase (Coxiella burnetii (strain CbuG_Q212) (Coxiella burnetii (strain Q212))).